A 2410-amino-acid polypeptide reads, in one-letter code: Coprinoferrin synthetase (2410 aa).

The segment at 237 to 646 is adenylation 1; it reads LERRAKTNPH…GRIDTQIKVR (410 aa). The Carrier 1 domain occupies 783-860; it reads RDCTPLEAEV…DIAQLVHVST (78 aa). Residue serine 820 is modified to O-(pantetheine 4'-phosphoryl)serine. The interval 891-1260 is condensation 1; sequence DILPPFPVQE…SVEAVVNVHD (370 aa). A disordered region spans residues 1298-1317; that stretch reads ELPLPSRRSPEPVRKVNDDE. Positions 1305–1314 are enriched in basic and acidic residues; the sequence is RSPEPVRKVN. Positions 1324–1400 constitute a Carrier 2 domain; that stretch reads LLDPVVVADL…RLARVVSNNK (77 aa). Serine 1361 carries the O-(pantetheine 4'-phosphoryl)serine modification. The tract at residues 1436–1839 is condensation 2; the sequence is IIPSTALQSG…RIGRTFSVPS (404 aa). A Carrier 3 domain is found at 1858–1932; sequence VQAGIIHPVL…DLVLQATEIK (75 aa). Serine 1893 bears the O-(pantetheine 4'-phosphoryl)serine mark. The segment at 1992–2315 is condensation 3; it reads FQYLFTFKLP…TPIFNVNVNV (324 aa).

The protein belongs to the NRP synthetase family.

It functions in the pathway siderophore biosynthesis. Nonribosomal peptide synthase; part of the gene cluster that mediates the biosynthesis of coprinoferrin, an acylated tripeptide hydroxamate siderophore. The biosynthesis of coprinoferrin depends on the hydroxylation of ornithine to N(5)-hydroxyornithine, catalyzed by the monooxygenase cpf2. The second step, the acylation of N(5)-hydroxy-L-ornithine to yield N(5)-hexanoyl-N(5)-hydroxyl-L-ornithine is catalyzed by a not yet identified acyltransferase. Finally, assembly of coprinoferrin is catalyzed by the nonribosomal peptide synthase (NRPS) cpf1 via amide bond formation between three N(5)-hexanoyl-N(5)-hydroxyl-L-ornithine molecules to release the linear trimer. Interestingly, proteins seemingly not directly related to biosynthesis, such as transcription factors, replication factors, and autophagy-related proteins, are conserved among the clusters homologous to the coprinoferrin cluster, suggesting that the cluster may also play developmental and cell biological functions. This chain is Coprinoferrin synthetase, found in Coprinopsis cinerea (strain Okayama-7 / 130 / ATCC MYA-4618 / FGSC 9003) (Inky cap fungus).